The following is a 351-amino-acid chain: sn-glycerol-3-phosphate import ATP-binding protein UgpC (351 aa).

The ABC transporter domain occupies 4-234; the sequence is ITLDNLVKAY…PATTFVAGFI (231 aa). 36–43 is an ATP binding site; that stretch reads GPSGCGKS.

This sequence belongs to the ABC transporter superfamily. sn-glycerol-3-phosphate importer (TC 3.A.1.1.3) family. As to quaternary structure, the complex is composed of two ATP-binding proteins (UgpC), two transmembrane proteins (UgpA and UgpE) and a solute-binding protein (UgpB).

It localises to the cell inner membrane. The catalysed reaction is sn-glycerol 3-phosphate(out) + ATP + H2O = sn-glycerol 3-phosphate(in) + ADP + phosphate + H(+). Part of the ABC transporter complex UgpBAEC involved in sn-glycerol-3-phosphate (G3P) import. Responsible for energy coupling to the transport system. This is sn-glycerol-3-phosphate import ATP-binding protein UgpC from Ruegeria pomeroyi (strain ATCC 700808 / DSM 15171 / DSS-3) (Silicibacter pomeroyi).